The following is a 540-amino-acid chain: 2,3-bisphosphoglycerate-independent phosphoglycerate mutase (540 aa).

Aspartate 13 and serine 63 together coordinate Mn(2+). Serine 63 acts as the Phosphoserine intermediate in catalysis. Residues histidine 124, 154 to 155, arginine 186, arginine 192, 262 to 265, and lysine 356 contribute to the substrate site; these read RD and RPDR. The Mn(2+) site is built by aspartate 423, histidine 427, aspartate 464, histidine 465, and histidine 483.

This sequence belongs to the BPG-independent phosphoglycerate mutase family. In terms of assembly, monomer. It depends on Mn(2+) as a cofactor.

The catalysed reaction is (2R)-2-phosphoglycerate = (2R)-3-phosphoglycerate. Its pathway is carbohydrate degradation; glycolysis; pyruvate from D-glyceraldehyde 3-phosphate: step 3/5. Catalyzes the interconversion of 2-phosphoglycerate and 3-phosphoglycerate. This Chloroflexus aurantiacus (strain ATCC 29366 / DSM 635 / J-10-fl) protein is 2,3-bisphosphoglycerate-independent phosphoglycerate mutase.